Reading from the N-terminus, the 172-residue chain is NADH-quinone oxidoreductase subunit B (172 aa).

[4Fe-4S] cluster is bound by residues Cys-46, Cys-47, Cys-111, and Cys-141.

It belongs to the complex I 20 kDa subunit family. NDH-1 is composed of 14 different subunits. Subunits NuoB, C, D, E, F, and G constitute the peripheral sector of the complex. [4Fe-4S] cluster serves as cofactor.

It is found in the cell membrane. It carries out the reaction a quinone + NADH + 5 H(+)(in) = a quinol + NAD(+) + 4 H(+)(out). NDH-1 shuttles electrons from NADH, via FMN and iron-sulfur (Fe-S) centers, to quinones in the respiratory chain. The immediate electron acceptor for the enzyme in this species is believed to be a menaquinone. Couples the redox reaction to proton translocation (for every two electrons transferred, four hydrogen ions are translocated across the cytoplasmic membrane), and thus conserves the redox energy in a proton gradient. This chain is NADH-quinone oxidoreductase subunit B, found in Bacillus cytotoxicus (strain DSM 22905 / CIP 110041 / 391-98 / NVH 391-98).